The sequence spans 313 residues: Putative HTH-type transcriptional regulatory protein Msm_0453 (313 aa).

Positions 131–189 constitute an HTH cro/C1-type domain; that stretch reads IKQYREEYSLSLKDLADLAHVSRATMYKYENEIVRANTETAMILEEILNTKVTLDIDLL. The segment at residues 142-161 is a DNA-binding region (H-T-H motif); the sequence is LKDLADLAHVSRATMYKYEN.

The sequence is that of Putative HTH-type transcriptional regulatory protein Msm_0453 from Methanobrevibacter smithii (strain ATCC 35061 / DSM 861 / OCM 144 / PS).